The sequence spans 199 residues: Guanylyl cyclase-activating protein 1 (199 aa).

G2 carries the N-myristoyl glycine lipid modification. N3 bears the Deamidated asparagine mark. EF-hand domains are found at residues 13–48 (SATE…KNLS), 50–85 (SANK…VLKG), 86–121 (KVDQ…IRAI), and 129–164 (TAEE…DEVL). Residues D63, N65, D67, Y69, E74, D99, D101, N103, C105, E110, D142, N144, D146, E148, and E153 each coordinate Ca(2+).

In terms of tissue distribution, retina, in rod and cone outer segments, and pineal gland.

Stimulates retinal guanylyl cyclase when free calcium ions concentration is low and inhibits guanylyl cyclase when free calcium ions concentration is elevated. This Ca(2+)-sensitive regulation of retinal guanylyl cyclase is a key event in recovery of the dark state of rod photoreceptors following light exposure. The polypeptide is Guanylyl cyclase-activating protein 1 (GUCA1A) (Gallus gallus (Chicken)).